Consider the following 125-residue polypeptide: Ribonuclease P protein component (125 aa).

This sequence belongs to the RnpA family. As to quaternary structure, consists of a catalytic RNA component (M1 or rnpB) and a protein subunit.

The enzyme catalyses Endonucleolytic cleavage of RNA, removing 5'-extranucleotides from tRNA precursor.. Functionally, RNaseP catalyzes the removal of the 5'-leader sequence from pre-tRNA to produce the mature 5'-terminus. It can also cleave other RNA substrates such as 4.5S RNA. The protein component plays an auxiliary but essential role in vivo by binding to the 5'-leader sequence and broadening the substrate specificity of the ribozyme. In Clostridium beijerinckii (strain ATCC 51743 / NCIMB 8052) (Clostridium acetobutylicum), this protein is Ribonuclease P protein component.